A 490-amino-acid polypeptide reads, in one-letter code: ATP synthase subunit beta, chloroplastic (490 aa).

Position 169–176 (169–176 (GGAGVGKT)) interacts with ATP.

This sequence belongs to the ATPase alpha/beta chains family. F-type ATPases have 2 components, CF(1) - the catalytic core - and CF(0) - the membrane proton channel. CF(1) has five subunits: alpha(3), beta(3), gamma(1), delta(1), epsilon(1). CF(0) has four main subunits: a(1), b(1), b'(1) and c(9-12).

The protein resides in the plastid. It localises to the chloroplast thylakoid membrane. The enzyme catalyses ATP + H2O + 4 H(+)(in) = ADP + phosphate + 5 H(+)(out). Its function is as follows. Produces ATP from ADP in the presence of a proton gradient across the membrane. The catalytic sites are hosted primarily by the beta subunits. In Cyanidium caldarium (Red alga), this protein is ATP synthase subunit beta, chloroplastic.